The primary structure comprises 437 residues: UDP-N-acetylmuramate--L-alanine ligase (437 aa).

Residue 108-114 (GAHGKTS) participates in ATP binding.

Belongs to the MurCDEF family.

The protein resides in the cytoplasm. The enzyme catalyses UDP-N-acetyl-alpha-D-muramate + L-alanine + ATP = UDP-N-acetyl-alpha-D-muramoyl-L-alanine + ADP + phosphate + H(+). It functions in the pathway cell wall biogenesis; peptidoglycan biosynthesis. In terms of biological role, cell wall formation. The protein is UDP-N-acetylmuramate--L-alanine ligase of Staphylococcus aureus (strain MRSA252).